A 101-amino-acid chain; its full sequence is Small ribosomal subunit protein uS14 (101 aa).

Residues 1–20 are disordered; it reads MAKTSQVNRNKRREKMAARD.

It belongs to the universal ribosomal protein uS14 family. In terms of assembly, part of the 30S ribosomal subunit. Contacts proteins S3 and S10.

Its function is as follows. Binds 16S rRNA, required for the assembly of 30S particles and may also be responsible for determining the conformation of the 16S rRNA at the A site. In Acidiphilium cryptum (strain JF-5), this protein is Small ribosomal subunit protein uS14.